A 189-amino-acid polypeptide reads, in one-letter code: Ribulose bisphosphate carboxylase small subunit, chloroplastic (189 aa).

Residues 1-66 constitute a chloroplast transit peptide; that stretch reads MASSIMALSS…KTTSNGSRVR (66 aa).

It belongs to the RuBisCO small chain family. Heterohexadecamer of 8 large and 8 small subunits.

The protein localises to the plastid. Its subcellular location is the chloroplast. Its function is as follows. RuBisCO catalyzes two reactions: the carboxylation of D-ribulose 1,5-bisphosphate, the primary event in carbon dioxide fixation, as well as the oxidative fragmentation of the pentose substrate. Both reactions occur simultaneously and in competition at the same active site. Although the small subunit is not catalytic it is essential for maximal activity. The protein is Ribulose bisphosphate carboxylase small subunit, chloroplastic of Larix laricina (Tamarack).